The chain runs to 472 residues: ATP synthase subunit beta (472 aa).

157–164 contacts ATP; it reads GGAGVGKT.

Belongs to the ATPase alpha/beta chains family. As to quaternary structure, F-type ATPases have 2 components, CF(1) - the catalytic core - and CF(0) - the membrane proton channel. CF(1) has five subunits: alpha(3), beta(3), gamma(1), delta(1), epsilon(1). CF(0) has three main subunits: a(1), b(2) and c(9-12). The alpha and beta chains form an alternating ring which encloses part of the gamma chain. CF(1) is attached to CF(0) by a central stalk formed by the gamma and epsilon chains, while a peripheral stalk is formed by the delta and b chains.

Its subcellular location is the cell inner membrane. It catalyses the reaction ATP + H2O + 4 H(+)(in) = ADP + phosphate + 5 H(+)(out). In terms of biological role, produces ATP from ADP in the presence of a proton gradient across the membrane. The catalytic sites are hosted primarily by the beta subunits. The chain is ATP synthase subunit beta from Desulfatibacillum aliphaticivorans.